We begin with the raw amino-acid sequence, 189 residues long: Interferon alpha-1 (189 aa).

An N-terminal signal peptide occupies residues 1–23; that stretch reads MAPTSAFLTALVLLSCNAICSLG. 2 disulfide bridges follow: Cys24-Cys122 and Cys52-Cys162.

It belongs to the alpha/beta interferon family. Interacts with CR2.

Its subcellular location is the secreted. Its function is as follows. Produced by macrophages, IFN-alpha have antiviral activities. Interferon stimulates the production of two enzymes: a protein kinase and an oligoadenylate synthetase. In Sus scrofa (Pig), this protein is Interferon alpha-1.